The sequence spans 490 residues: 5'-3' exonuclease PLD3 (490 aa).

Residues 1 to 38 (MKPKLMYQELKVPAEEPANELPMNEIEAWKAAEKKARW) are Cytoplasmic-facing. A helical; Signal-anchor for type II membrane protein transmembrane segment spans residues 39-59 (VLLVLILAVVGFGALMTQLFL). Residues 60–490 (WEYGDLHLFG…DSVGNACRLL (431 aa)) lie on the Lumenal side of the membrane. 2 disulfide bridges follow: C77–C239 and C81–C237. N97 and N132 each carry an N-linked (GlcNAc...) asparagine glycan. The 28-residue stretch at 196 to 223 (THGVLHTKFWVVDQTHFYLGSANMDWRS) folds into the PLD phosphodiesterase 1 domain. Active-site residues include H201, K203, and D208. H201 serves as the catalytic Proton donor. Phosphate is bound by residues H201 and K203. A phosphate-binding site is contributed by N218. Residues N236, N284, and N387 are each glycosylated (N-linked (GlcNAc...) asparagine). A disulfide bridge connects residues C366 and C487. The region spanning 411–437 (YARVNHNKYMVTERATYIGTSNWSGNY) is the PLD phosphodiesterase 2 domain. H416 contacts phosphate. H416 acts as the Nucleophile in catalysis. F438 is a Mg(2+) binding site.

This sequence belongs to the phospholipase D family. As to quaternary structure, homodimer. Interacts with APP. N-glycosylated. In terms of processing, proteolytically processed to a soluble form that is stable within endosomes and lysosomes. During transport through the secretory pathway becomes proteolysed by cysteine proteases, thereby releasing a stable soluble lysosomal lumenal polypeptide, whereas the transmembrane-bound fragment is rapidly degraded. Its transport route to lysosomes involves ubiquitination and the ESCRT complex. Post-translationally, ubiquitinated. Ubiquitination mediates sorting into lysosomes.

It localises to the endoplasmic reticulum membrane. The protein resides in the lysosome lumen. The protein localises to the early endosome membrane. It is found in the late endosome membrane. Its subcellular location is the golgi apparatus membrane. It localises to the endosome membrane. It catalyses the reaction Exonucleolytic cleavage in the 5'- to 3'-direction to yield nucleoside 3'-phosphates.. The enzyme catalyses a 5'-end 5'-dephospho-ribonucleotidyl-ribonucleotide-RNA + H2O = a ribonucleoside 3'-phosphate + a 5'-end dephospho-ribonucleoside-RNA + H(+). The catalysed reaction is a ribonucleoside 3'-phosphate-2'-3'-cyclophospho-GMP + H2O = a ribonucleoside 3'-phosphate + 2',3'-cyclophospho-GMP + H(+). It carries out the reaction a 5'-end 5'-dephospho-2'-deoxyribonucleotidyl-2'-deoxyribonucleotide in single-stranded DNA + H2O = a 5'-end dephospho-2'-deoxyribonucleoside in single-stranded DNA + a 2'-deoxyribonucleoside 3'-phosphate + H(+). It catalyses the reaction a 5'-end 5'-phospho-2'-deoxyribonucleotide in single-stranded DNA + H2O = a 5'-end 5'-dephospho-2'-deoxyribonucleotide in single-stranded DNA + phosphate. The enzyme catalyses a 3-lyso-sn-glycero-1-phospho-(3'-acyl-1'-sn-glycerol) + a 1-acyl-sn-glycerol = a 3-acyl-sn-glycero-1-phospho-(3'-acyl-1'-sn-glycerol) + glycerol. The catalysed reaction is 3-lyso-sn-glycero-1-phospho-(3'-(9Z-octadecenoyl)-1'-sn-glycerol) + 1-(9Z-octadecenoyl)-sn-glycerol = 3-(9Z-octadecenoyl)-sn-glycero-1-phospho-(3'-(9Z-octadecenoyl)-1'-sn-glycerol) + glycerol. Its function is as follows. 5'-&gt;3' exonuclease that hydrolyzes the phosphodiester bond of single-stranded DNA (ssDNA) and RNA molecules to form nucleoside 3'-monophosphates and 5'-end 5'-hydroxy deoxyribonucleotide/ribonucleotide fragments. Partially redundant with PLD4, can cleave all four nucleotides displaying higher efficiency for ssDNA and RNA fragments initiated with uridine and guanosine residues and lower efficiency for cytidine-initiated substrates. As a result, it does not always degrade polynucleotides to the single nucleotide level, it can stall at specific sites sparing certain fragments from exonucleolytic degradation. Processes self and pathogenic ssDNA and RNA molecules that reach the endolysosomal compartment via phagocytosis or autophagy and may serve as 'danger' signals for recognition by innate immune receptors such as toll-like receptors (TLRs). Degrades mitochondrial CpG-rich ssDNA fragments to prevent TLR9 activation and autoinflammatory response, but it can cleave viral RNA to generate ligands for TLR7 activation and initiate antiviral immune responses. In plasmacytoid dendritic cells, it cooperates with endonuclease RNASET2 to release 2',3'-cyclic guanosine monophosphate (2',3'-cGMP), a potent stimulatory ligand for TLR7. Produces 2',3'-cGMPs and cytidine-rich RNA fragments that occupy TLR7 ligand-binding pockets and trigger a signaling-competent state. Can exert polynucleotide phosphatase activity toward 5'-phosphorylated ssDNA substrates although at a slow rate. Transphosphatidylase that catalyzes the exchange with R to S stereo-inversion of the glycerol moiety between (S,R)-lysophosphatidylglycerol (LPG) and monoacylglycerol (MAG) substrates to yield (S,S)-bis(monoacylglycero)phosphate (BMP). Can synthesize a variety of (S,S)-BMPs representing the main phospholipid constituent of lysosomal intralumenal vesicle (ILV) membranes that bind acid hydrolases for lipid degradation. Regulates the homeostasis and interorganellar communication of the endolysosomal system with an overall impact on cellular removal of dysfunctional organelles via autophagy as well as proper protein and lipid turnover. May play a role in myotube formation in response to ER stress. This Macaca fascicularis (Crab-eating macaque) protein is 5'-3' exonuclease PLD3 (PLD3).